Here is a 346-residue protein sequence, read N- to C-terminus: tRNA N6-adenosine threonylcarbamoyltransferase (346 aa).

The Fe cation site is built by H111 and H115. Substrate-binding positions include 134-138 (LVSGG), D167, G180, and N279. A Fe cation-binding site is contributed by D307.

This sequence belongs to the KAE1 / TsaD family. Requires Fe(2+) as cofactor.

It localises to the cytoplasm. The enzyme catalyses L-threonylcarbamoyladenylate + adenosine(37) in tRNA = N(6)-L-threonylcarbamoyladenosine(37) in tRNA + AMP + H(+). Its function is as follows. Required for the formation of a threonylcarbamoyl group on adenosine at position 37 (t(6)A37) in tRNAs that read codons beginning with adenine. Is involved in the transfer of the threonylcarbamoyl moiety of threonylcarbamoyl-AMP (TC-AMP) to the N6 group of A37, together with TsaE and TsaB. TsaD likely plays a direct catalytic role in this reaction. In Burkholderia ambifaria (strain ATCC BAA-244 / DSM 16087 / CCUG 44356 / LMG 19182 / AMMD) (Burkholderia cepacia (strain AMMD)), this protein is tRNA N6-adenosine threonylcarbamoyltransferase.